The primary structure comprises 443 residues: Squalene synthase (443 aa).

Transmembrane regions (helical) follow at residues 291 to 311 and 423 to 443; these read TSFN…ELVF and ILLL…VRII.

It belongs to the phytoene/squalene synthase family. Mg(2+) is required as a cofactor.

The protein localises to the endoplasmic reticulum membrane. It catalyses the reaction 2 (2E,6E)-farnesyl diphosphate + NADPH + H(+) = squalene + 2 diphosphate + NADP(+). The catalysed reaction is 2 (2E,6E)-farnesyl diphosphate + NADH + H(+) = squalene + 2 diphosphate + NAD(+). It functions in the pathway terpene metabolism; lanosterol biosynthesis; lanosterol from farnesyl diphosphate: step 1/3. Catalyzes the condensation of 2 two farnesyl pyrophosphate moieties to form squalene. It is the first committed enzyme of the sterol biosynthesis pathway. Required for the biosynthesis of ergosterol. This chain is Squalene synthase (ERG9), found in Cyberlindnera jadinii (Torula yeast).